The following is a 929-amino-acid chain: Alanine--tRNA ligase (929 aa).

Zn(2+) is bound by residues His-619, His-623, Cys-722, and His-726.

The protein belongs to the class-II aminoacyl-tRNA synthetase family. It depends on Zn(2+) as a cofactor.

It localises to the cytoplasm. It catalyses the reaction tRNA(Ala) + L-alanine + ATP = L-alanyl-tRNA(Ala) + AMP + diphosphate. Catalyzes the attachment of alanine to tRNA(Ala) in a two-step reaction: alanine is first activated by ATP to form Ala-AMP and then transferred to the acceptor end of tRNA(Ala). Also edits incorrectly charged Ser-tRNA(Ala) and Gly-tRNA(Ala) via its editing domain. This is Alanine--tRNA ligase from Halobacterium salinarum (strain ATCC 29341 / DSM 671 / R1).